The following is a 299-amino-acid chain: Lipoyl synthase 2 (299 aa).

Positions 43, 48, 54, 69, 73, 76, and 294 each coordinate [4Fe-4S] cluster. A Radical SAM core domain is found at 55–283 (YAAGTATFLL…GAVARDLGFA (229 aa)).

This sequence belongs to the radical SAM superfamily. Lipoyl synthase family. [4Fe-4S] cluster serves as cofactor.

It is found in the cytoplasm. The catalysed reaction is [[Fe-S] cluster scaffold protein carrying a second [4Fe-4S](2+) cluster] + N(6)-octanoyl-L-lysyl-[protein] + 2 oxidized [2Fe-2S]-[ferredoxin] + 2 S-adenosyl-L-methionine + 4 H(+) = [[Fe-S] cluster scaffold protein] + N(6)-[(R)-dihydrolipoyl]-L-lysyl-[protein] + 4 Fe(3+) + 2 hydrogen sulfide + 2 5'-deoxyadenosine + 2 L-methionine + 2 reduced [2Fe-2S]-[ferredoxin]. It functions in the pathway protein modification; protein lipoylation via endogenous pathway; protein N(6)-(lipoyl)lysine from octanoyl-[acyl-carrier-protein]: step 2/2. Catalyzes the radical-mediated insertion of two sulfur atoms into the C-6 and C-8 positions of the octanoyl moiety bound to the lipoyl domains of lipoate-dependent enzymes, thereby converting the octanoylated domains into lipoylated derivatives. This chain is Lipoyl synthase 2, found in Parasynechococcus marenigrum (strain WH8102).